The following is a 381-amino-acid chain: L-lactate dehydrogenase (381 aa).

The 380-residue stretch at 1–380 folds into the FMN hydroxy acid dehydrogenase domain; sequence MIISSASDYR…KPEALVDLSK (380 aa). Tyr-24 provides a ligand contact to substrate. Ser-106 and Gln-127 together coordinate FMN. Residue Tyr-129 participates in substrate binding. Thr-155 provides a ligand contact to FMN. Arg-164 lines the substrate pocket. Lys-251 is a binding site for FMN. The active-site Proton acceptor is the His-275. Arg-278 is a substrate binding site. Residue 306–330 coordinates FMN; sequence DSGIRNGLDIVRMLALGADATMLGR.

Belongs to the FMN-dependent alpha-hydroxy acid dehydrogenase family. FMN is required as a cofactor.

Its subcellular location is the cell inner membrane. The enzyme catalyses (S)-lactate + A = pyruvate + AH2. Catalyzes the conversion of L-lactate to pyruvate. Is coupled to the respiratory chain. The sequence is that of L-lactate dehydrogenase from Haemophilus influenzae (strain ATCC 51907 / DSM 11121 / KW20 / Rd).